A 343-amino-acid polypeptide reads, in one-letter code: Probable dual-specificity RNA methyltransferase RlmN (343 aa).

The active-site Proton acceptor is Glu90. The region spanning 96-325 is the Radical SAM core domain; sequence HEGYATACIS…AEIRYEKGAD (230 aa). Cys103 and Cys330 are oxidised to a cystine. 3 residues coordinate [4Fe-4S] cluster: Cys110, Cys114, and Cys117. S-adenosyl-L-methionine contacts are provided by residues 157-158, Ser189, 212-214, and Asn288; these read GE and SLH. Cys330 acts as the S-methylcysteine intermediate in catalysis.

This sequence belongs to the radical SAM superfamily. RlmN family. [4Fe-4S] cluster serves as cofactor.

It localises to the cytoplasm. The enzyme catalyses adenosine(2503) in 23S rRNA + 2 reduced [2Fe-2S]-[ferredoxin] + 2 S-adenosyl-L-methionine = 2-methyladenosine(2503) in 23S rRNA + 5'-deoxyadenosine + L-methionine + 2 oxidized [2Fe-2S]-[ferredoxin] + S-adenosyl-L-homocysteine. It catalyses the reaction adenosine(37) in tRNA + 2 reduced [2Fe-2S]-[ferredoxin] + 2 S-adenosyl-L-methionine = 2-methyladenosine(37) in tRNA + 5'-deoxyadenosine + L-methionine + 2 oxidized [2Fe-2S]-[ferredoxin] + S-adenosyl-L-homocysteine. Functionally, specifically methylates position 2 of adenine 2503 in 23S rRNA and position 2 of adenine 37 in tRNAs. The chain is Probable dual-specificity RNA methyltransferase RlmN from Pseudothermotoga lettingae (strain ATCC BAA-301 / DSM 14385 / NBRC 107922 / TMO) (Thermotoga lettingae).